A 224-amino-acid polypeptide reads, in one-letter code: Glutathione S-transferase D7 (224 aa).

The GST N-terminal domain maps to 2 to 83 (PNLDLYNFPM…YLVEKYGKPD (82 aa)). Residues 53-55 (HTI) and 67-69 (ESR) each bind glutathione. Residues 90–210 (DPQKRALINQ…LESLQQGKKF (121 aa)) enclose the GST C-terminal domain.

This sequence belongs to the GST superfamily. Delta family. As to quaternary structure, homodimer.

It carries out the reaction RX + glutathione = an S-substituted glutathione + a halide anion + H(+). In terms of biological role, conjugation of reduced glutathione to a wide number of exogenous and endogenous hydrophobic electrophiles. May be involved in detoxification. This chain is Glutathione S-transferase D7, found in Drosophila melanogaster (Fruit fly).